Reading from the N-terminus, the 187-residue chain is Flavin prenyltransferase LpdB (187 aa).

FMN-binding positions include 10–12 (GAS), serine 37, 88–91 (SMKT), and arginine 123. Residues tyrosine 153 and lysine 169 each coordinate dimethylallyl phosphate.

Belongs to the UbiX/PAD1 family.

It catalyses the reaction dimethylallyl phosphate + FMNH2 = prenylated FMNH2 + phosphate. Its function is as follows. Involved in tannin degradation. Flavin prenyltransferase that catalyzes the synthesis of the prenylated FMN cofactor (prenyl-FMN) for gallate decarboxylase LpdC. The prenyltransferase is metal-independent and links a dimethylallyl moiety from dimethylallyl monophosphate (DMAP) to the flavin N5 and C6 atoms of FMN. This is Flavin prenyltransferase LpdB from Lactiplantibacillus plantarum (strain ATCC BAA-793 / NCIMB 8826 / WCFS1) (Lactobacillus plantarum).